A 138-amino-acid chain; its full sequence is MNFYLDVVSLTKTIFSGFVEKIRVSGSEGELGIYPGHAQLLSILKPGMVYIFHKKDKKEECIYISGGILEVQPSVVSILADVAIHAIDLDRSRILKTKKNAEESIKSNNTKINKDAILLQISKEIAKLRVLEVMDKFK.

The protein belongs to the ATPase epsilon chain family. As to quaternary structure, F-type ATPases have 2 components, CF(1) - the catalytic core - and CF(0) - the membrane proton channel. CF(1) has five subunits: alpha(3), beta(3), gamma(1), delta(1), epsilon(1). CF(0) has three main subunits: a, b and c.

Its subcellular location is the cell membrane. Produces ATP from ADP in the presence of a proton gradient across the membrane. The chain is ATP synthase epsilon chain (atpC) from Buchnera aphidicola subsp. Acyrthosiphon pisum (strain APS) (Acyrthosiphon pisum symbiotic bacterium).